Consider the following 235-residue polypeptide: Protein fmp52-1, mitochondrial (235 aa).

The transit peptide at 1–36 (MANTALIGCTGMVGSFILNNLLAHPSVARVDTISRR) directs the protein to the mitochondrion.

Belongs to the FMP52 family.

Its subcellular location is the mitochondrion outer membrane. The sequence is that of Protein fmp52-1, mitochondrial (fmp521) from Aspergillus oryzae (strain ATCC 42149 / RIB 40) (Yellow koji mold).